We begin with the raw amino-acid sequence, 542 residues long: MSKQPIITSEEVRGVIRNLLDSTLSAAREANEFEVGRVVDAADGVAHIEGLPALMASELVEFSNGTFGVTLNLDEDLAGVVVLGEFDGIVEGMDVRSTGRVLSIPVGDAFLGRVVDPLGRPVDGLGEVPHETYRELELQAAGVMQRRSVHEPIQTGIKAIDTMIPIGRGQRQLIIGDRQTGKTTIAIDTIINQKDNWSDPEKRVFCIYVAIGQKGSTIAGVKRVLEEAGCMEYTTIVATPASDPAGFKYIAPYSGSAIGQHWMYQGRHVLIVFDDLSKQAEAYRAISLLLRRPPGREAYPGDVFYLHSRLLERCAKLSDEMGGGSMTGLPIIETKANDISAYIPTNVISITDGQIFLQSDLFNANQRPAVDVGISVSRVGGDAQIKSIKKVSGMLKLELAQYRALEAFSMFASDLDAVSRRQLDRGARLSELLRQQQQSPYPVEDQVVSIWVGSNGYIDDIPLSDVLDFERDLLEYLRNRTSILDDLRTCGDLTDALLERLKEAVESFKNKVYFMRVDEREKDPLEDENIGQEELVRSRRAN.

Residue 176 to 183 participates in ATP binding; sequence GDRQTGKT.

It belongs to the ATPase alpha/beta chains family. As to quaternary structure, F-type ATPases have 2 components, CF(1) - the catalytic core - and CF(0) - the membrane proton channel. CF(1) has five subunits: alpha(3), beta(3), gamma(1), delta(1), epsilon(1). CF(0) has three main subunits: a(1), b(2) and c(9-12). The alpha and beta chains form an alternating ring which encloses part of the gamma chain. CF(1) is attached to CF(0) by a central stalk formed by the gamma and epsilon chains, while a peripheral stalk is formed by the delta and b chains.

Its subcellular location is the cell membrane. The catalysed reaction is ATP + H2O + 4 H(+)(in) = ADP + phosphate + 5 H(+)(out). Functionally, produces ATP from ADP in the presence of a proton gradient across the membrane. The alpha chain is a regulatory subunit. In Tropheryma whipplei (strain TW08/27) (Whipple's bacillus), this protein is ATP synthase subunit alpha.